The chain runs to 458 residues: Probable threonine--tRNA ligase, cytoplasmic (458 aa).

Positions 41 to 104 (DPIKITLLPD…EGDCSLEIFG (64 aa)) constitute a TGS domain.

Belongs to the class-II aminoacyl-tRNA synthetase family.

Its subcellular location is the cytoplasm. The enzyme catalyses tRNA(Thr) + L-threonine + ATP = L-threonyl-tRNA(Thr) + AMP + diphosphate + H(+). This Arabidopsis thaliana (Mouse-ear cress) protein is Probable threonine--tRNA ligase, cytoplasmic.